Reading from the N-terminus, the 397-residue chain is Enoyl-[acyl-carrier-protein] reductase [NADH] (397 aa).

NAD(+) contacts are provided by residues 48 to 53, 74 to 75, 111 to 112, and 139 to 140; these read GASTGY, FE, DA, and LA. Tyrosine 225 provides a ligand contact to substrate. The active-site Proton donor is the tyrosine 235. NAD(+) contacts are provided by residues lysine 244 and 273-275; that span reads VVT.

This sequence belongs to the TER reductase family. In terms of assembly, monomer.

The enzyme catalyses a 2,3-saturated acyl-[ACP] + NAD(+) = a (2E)-enoyl-[ACP] + NADH + H(+). It participates in lipid metabolism; fatty acid biosynthesis. Its function is as follows. Involved in the final reduction of the elongation cycle of fatty acid synthesis (FAS II). Catalyzes the reduction of a carbon-carbon double bond in an enoyl moiety that is covalently linked to an acyl carrier protein (ACP). The chain is Enoyl-[acyl-carrier-protein] reductase [NADH] from Edwardsiella ictaluri (strain 93-146).